The sequence spans 1058 residues: Kinesin-like protein KIN-7M, chloroplastic (1058 aa).

The N-terminal 60 residues, M1–R60, are a transit peptide targeting the chloroplast. The interval M1–G92 is disordered. The span at T8–P19 shows a compositional bias: basic residues. Residues Y23–T49 are compositionally biased toward low complexity. Residues V50–D70 are compositionally biased toward polar residues. Positions S104–I421 constitute a Kinesin motor domain. An ATP-binding site is contributed by G184 to T191. A coiled-coil region spans residues E422–S509. The segment at P549–E578 is disordered. Over residues D558 to N570 the composition is skewed to basic and acidic residues. 4 coiled-coil regions span residues P621–A658, N704–R826, L873–D904, and K935–A999. Over residues Q824–N838 the composition is skewed to low complexity. The segment at Q824 to R847 is disordered. A disordered region spans residues A922–N946. The segment covering K927 to N946 has biased composition (basic and acidic residues). An RING-type zinc finger spans residues C1011–R1046.

This sequence belongs to the TRAFAC class myosin-kinesin ATPase superfamily. Kinesin family. KIN-7 subfamily.

It is found in the plastid. Its subcellular location is the chloroplast. The chain is Kinesin-like protein KIN-7M, chloroplastic from Arabidopsis thaliana (Mouse-ear cress).